The primary structure comprises 287 residues: Acetyl-coenzyme A carboxylase carboxyl transferase subunit beta (287 aa).

In terms of domain architecture, CoA carboxyltransferase N-terminal spans 25-287; it reads IWTKCSGCVQ…KLTQQSFSEK (263 aa). Residues Cys-29, Cys-32, Cys-48, and Cys-51 each contribute to the Zn(2+) site. The segment at 29-51 adopts a C4-type zinc-finger fold; it reads CSGCVQLLYTKELERNLQVCPKC.

It belongs to the AccD/PCCB family. As to quaternary structure, acetyl-CoA carboxylase is a heterohexamer composed of biotin carboxyl carrier protein (AccB), biotin carboxylase (AccC) and two subunits each of ACCase subunit alpha (AccA) and ACCase subunit beta (AccD). Requires Zn(2+) as cofactor.

Its subcellular location is the cytoplasm. It carries out the reaction N(6)-carboxybiotinyl-L-lysyl-[protein] + acetyl-CoA = N(6)-biotinyl-L-lysyl-[protein] + malonyl-CoA. It participates in lipid metabolism; malonyl-CoA biosynthesis; malonyl-CoA from acetyl-CoA: step 1/1. In terms of biological role, component of the acetyl coenzyme A carboxylase (ACC) complex. Biotin carboxylase (BC) catalyzes the carboxylation of biotin on its carrier protein (BCCP) and then the CO(2) group is transferred by the transcarboxylase to acetyl-CoA to form malonyl-CoA. This chain is Acetyl-coenzyme A carboxylase carboxyl transferase subunit beta, found in Blochmanniella floridana.